Here is a 218-residue protein sequence, read N- to C-terminus: MNAAKVETSSMGMLQRADLTAADCLQEGEMGKKIQGKCFRIISTVSPVKLYCCYGVIMVLTVAVIALSVALSVRNKIPAMEDREPCYTACPSGWIGFGSKCFYFSEDMGNWTFSQSSCVASNSHLALFHSLEELNFLKRYKGTSDHWIGLHRASTQHPWIWTDNTEYSNLVLTRGGGECGFLSDNGISSGRSYTHRKWICSKFVSSCKSRVGSVPRHV.

Residues 1–52 (MNAAKVETSSMGMLQRADLTAADCLQEGEMGKKIQGKCFRIISTVSPVKLYC) lie on the Cytoplasmic side of the membrane. Residues 53–73 (CYGVIMVLTVAVIALSVALSV) form a helical; Signal-anchor for type II membrane protein membrane-spanning segment. Residues 74–218 (RNKIPAMEDR…SRVGSVPRHV (145 aa)) lie on the Extracellular side of the membrane. Cysteine 90 and cysteine 101 are joined by a disulfide. The 105-residue stretch at 97 to 201 (FGSKCFYFSE…SYTHRKWICS (105 aa)) folds into the C-type lectin domain. N-linked (GlcNAc...) asparagine glycosylation is present at asparagine 110. A disulfide bond links cysteine 118 and cysteine 200.

As to expression, detected in ileum, liver, kidney and in IL2-activated natural killer cells.

It is found in the cell membrane. Functionally, lectin-type cell surface receptor. This chain is C-type lectin domain family 2 member H (Clec2h), found in Mus musculus (Mouse).